Consider the following 296-residue polypeptide: Claudin-23 (296 aa).

At 1 to 2 the chain is on the cytoplasmic side; the sequence is MR. Residues 3–23 form a helical membrane-spanning segment; it reads TPVVMTLGMVLTPCGLLLNLV. The Extracellular segment spans residues 24–81; that stretch reads STLAPGWRLVKGFLDQPVDVVLYQGLWDICREQSSRERECGQPDEWNYFQTQPVQVAR. A helical membrane pass occupies residues 82-102; sequence GLMITSLATTALGLLLASLGV. Topologically, residues 103–111 are cytoplasmic; that stretch reads RCWQDEPHY. The chain crosses the membrane as a helical span at residues 112–132; the sequence is GLAGLSGVVFFVAGLFSLIPV. The Extracellular segment spans residues 133–160; sequence SWYNHFLSDPDVLAAPSSPVTVQVSYSL. A helical membrane pass occupies residues 161 to 181; sequence VLGYLGSCLLLLGGFSLALSF. Residues 182–296 are Cytoplasmic-facing; sequence APWCEERCRR…QNSLPCDSDL (115 aa). The tract at residues 224–296 is disordered; sequence YSDGQHRPPP…QNSLPCDSDL (73 aa). Positions 273–284 are enriched in low complexity; that stretch reads TSQGGSSSRSTR. The span at 285–296 shows a compositional bias: polar residues; it reads PCQNSLPCDSDL.

It belongs to the claudin family.

Its subcellular location is the cell junction. The protein resides in the tight junction. The protein localises to the cell membrane. Plays a major role in tight junction-specific obliteration of the intercellular space, through calcium-independent cell-adhesion activity. The protein is Claudin-23 (Cldn23) of Mus musculus (Mouse).